Consider the following 198-residue polypeptide: Holliday junction branch migration complex subunit RuvA (198 aa).

Positions 1-63 are domain I; the sequence is MYSYIIGVIT…EDASILYGFS (63 aa). The interval 64–142 is domain II; sequence SQKERELFNL…KDFVPSEKPV (79 aa). The interval 143–153 is flexible linker; the sequence is NKEVKRSNDSE. The tract at residues 153–198 is domain III; sequence EFAREALLQLGYFKNDVDAFIENTDISGLSIEDIMKKAMKSLDSSR.

The protein belongs to the RuvA family. As to quaternary structure, homotetramer. Forms an RuvA(8)-RuvB(12)-Holliday junction (HJ) complex. HJ DNA is sandwiched between 2 RuvA tetramers; dsDNA enters through RuvA and exits via RuvB. An RuvB hexamer assembles on each DNA strand where it exits the tetramer. Each RuvB hexamer is contacted by two RuvA subunits (via domain III) on 2 adjacent RuvB subunits; this complex drives branch migration. In the full resolvosome a probable DNA-RuvA(4)-RuvB(12)-RuvC(2) complex forms which resolves the HJ.

The protein localises to the cytoplasm. Functionally, the RuvA-RuvB-RuvC complex processes Holliday junction (HJ) DNA during genetic recombination and DNA repair, while the RuvA-RuvB complex plays an important role in the rescue of blocked DNA replication forks via replication fork reversal (RFR). RuvA specifically binds to HJ cruciform DNA, conferring on it an open structure. The RuvB hexamer acts as an ATP-dependent pump, pulling dsDNA into and through the RuvAB complex. HJ branch migration allows RuvC to scan DNA until it finds its consensus sequence, where it cleaves and resolves the cruciform DNA. The protein is Holliday junction branch migration complex subunit RuvA of Finegoldia magna (strain ATCC 29328 / DSM 20472 / WAL 2508) (Peptostreptococcus magnus).